The following is a 249-amino-acid chain: MAMLRVQPEAQAKVDVFREDLCTKTENLLGSYFPKKISELDAFLKEPALNEANLSNLKAPLDIPVPDPVKEKEKEERKKQQEKEDKDEKKKGEDEDKGPPCGPVNCNEKIVVLLQRLKPEIKDVIEQLNLVTTWLQLQIPRIEDGNNFGVAVQEKVFELMTSLHTKLEGFHTQISKYFSERGDAVTKAAKQPHVGDYRQLVHELDEAEYRDIRLMVMEIRNAYAVLYDIILKNFEKLKKPRGETKGMIY.

Residues P60–G102 form a disordered region. Residues P68–G98 are compositionally biased toward basic and acidic residues.

This sequence belongs to the PA28 family. Heterodimer of PSME1 and PSME2, which forms a hexameric ring. PSME1 can form homoheptamers.

Its function is as follows. Implicated in immunoproteasome assembly and required for efficient antigen processing. The PA28 activator complex enhances the generation of class I binding peptides by altering the cleavage pattern of the proteasome. The polypeptide is Proteasome activator complex subunit 1 (PSME1) (Homo sapiens (Human)).